We begin with the raw amino-acid sequence, 181 residues long: Bifunctional protein PyrR (181 aa).

A PRPP-binding motif is present at residues 101–113 (VILVDDVLFTGRT).

This sequence belongs to the purine/pyrimidine phosphoribosyltransferase family. PyrR subfamily.

The catalysed reaction is UMP + diphosphate = 5-phospho-alpha-D-ribose 1-diphosphate + uracil. Regulates the transcription of the pyrimidine nucleotide (pyr) operon in response to exogenous pyrimidines. Its function is as follows. Also displays a weak uracil phosphoribosyltransferase activity which is not physiologically significant. The polypeptide is Bifunctional protein PyrR (Desulfosudis oleivorans (strain DSM 6200 / JCM 39069 / Hxd3) (Desulfococcus oleovorans)).